The following is a 327-amino-acid chain: MAMTAEVKDELSRLVVTHVSCRKAEVSSLLRFAGGLHIVGGRVVVEAEVDLGSTARRLRREIFDLFTYSADVHVLSAGGLRKSSRYIVRVAKEGEALARQTGLLDLRGRPVRGLPAQVVGGSVADAEAAWRGAFLAHGSLTEPGRSSALEVSCPGPEAALALVGAARRLGISAKAREVRGTDRVVIRDGEAIGALLTRMGAQDTRLVWEERRMRREVRATANRLANFDDANLRRSARAAVAAAARVERALDILGDEVPDHLAAAGHLRVEHRQASLEELGQLADPPMTKDAVAGRIRRLLSMADRKAKETGIPDTESAVTADLLDDA.

Positions Ser275–Lys308 form a DNA-binding region, H-T-H motif. The tract at residues Lys306 to Ala327 is disordered.

It belongs to the WhiA family.

Functionally, involved in cell division and chromosome segregation. The chain is Probable cell division protein WhiA from Rhodococcus jostii (strain RHA1).